A 217-amino-acid chain; its full sequence is Small ribosomal subunit protein uS3 (217 aa).

The KH type-2 domain occupies 38–106; sequence IRKYIEQRLA…RVHINIIEIK (69 aa).

Belongs to the universal ribosomal protein uS3 family. Part of the 30S ribosomal subunit. Forms a tight complex with proteins S10 and S14.

Binds the lower part of the 30S subunit head. Binds mRNA in the 70S ribosome, positioning it for translation. The polypeptide is Small ribosomal subunit protein uS3 (Lactiplantibacillus plantarum (strain ATCC BAA-793 / NCIMB 8826 / WCFS1) (Lactobacillus plantarum)).